A 954-amino-acid polypeptide reads, in one-letter code: Mitogen-activated protein kinase kinase kinase 10 (954 aa).

Positions 16-81 constitute an SH3 domain; it reads PAGPVWTAVF…PSNYVAPGAP (66 aa). The Protein kinase domain maps to 98-360; that stretch reads LQLEEIIGVG…GSILKRLEVI (263 aa). ATP-binding positions include 104-112 and K125; that span reads IGVGGFGKV. D222 functions as the Proton acceptor in the catalytic mechanism. The residue at position 258 (T258) is a Phosphothreonine; by autocatalysis. Phosphoserine; by autocatalysis and MAP4K1 is present on S262. Leucine-zipper stretches follow at residues 384–405 and 419–440; these read IQHM…EEEL and LRRR…ELHL. Disordered stretches follow at residues 490–665, 716–739, and 757–954; these read PTLD…RWGH, RFPR…PGLG, and STRS…HGSH. Phosphoserine occurs at positions 498, 502, and 506. The span at 501-511 shows a compositional bias: low complexity; it reads ASPPASPSIIP. A Phosphothreonine modification is found at T558. The segment covering 566 to 578 has biased composition (basic and acidic residues); the sequence is QKERVGGEERLKG. The segment covering 611–620 has biased composition (acidic residues); the sequence is EMEEFAEAED. The segment covering 631–640 has biased composition (low complexity); the sequence is STPSYLSVPL. The span at 773–790 shows a compositional bias: pro residues; that stretch reads APSPPPSPPAPTPTPSPS. Omega-N-methylarginine is present on R857. Residues 913 to 927 are compositionally biased toward pro residues; sequence PSRPDTPESPGPPSV.

This sequence belongs to the protein kinase superfamily. STE Ser/Thr protein kinase family. MAP kinase kinase kinase subfamily. Homodimer. Interacts with SH3RF2. The cofactor is Mg(2+). Autophosphorylation on serine and threonine residues within the activation loop plays a role in enzyme activation. As to expression, expressed in brain and skeletal muscle.

It catalyses the reaction L-seryl-[protein] + ATP = O-phospho-L-seryl-[protein] + ADP + H(+). The enzyme catalyses L-threonyl-[protein] + ATP = O-phospho-L-threonyl-[protein] + ADP + H(+). With respect to regulation, homodimerization via the leucine zipper domains is required for autophosphorylation and subsequent activation. Functionally, activates the JUN N-terminal pathway. The polypeptide is Mitogen-activated protein kinase kinase kinase 10 (MAP3K10) (Homo sapiens (Human)).